Reading from the N-terminus, the 940-residue chain is Pentatricopeptide repeat-containing protein At5g14770, mitochondrial (940 aa).

The transit peptide at 1–24 directs the protein to the mitochondrion; it reads MIMIRIWNNYKGKYRFFLSNCRSF. 24 PPR repeats span residues 59-93, 94-129, 130-161, 162-196, 197-231, 241-259, 260-294, 295-329, 330-364, 365-399, 400-434, 435-469, 470-504, 505-539, 540-573, 574-608, 609-643, 644-678, 679-713, 714-748, 749-783, 784-818, 819-853, and 854-891; these read YVSL…GVVP, DSRL…GVSP, DVFA…VISI, DTVT…GILP, DTVS…NLIT, NLHA…GFDP, DVVT…SVYP, NHVT…GIPV, DLVV…NQVP, NVVT…SVIP, NVVT…NVVP, NGFT…GVEE, NNYI…GVTL, DQIN…GMPW, DVVS…GIEP, DIAT…GIKP, SLMS…EIHP, NLTT…GIKL, SRQV…GFIP, DTVT…GISP, NVAT…GMRP, DDFT…GLVP, KTST…GVSP, and NTST…GLLK.

The protein belongs to the PPR family. P subfamily.

It is found in the mitochondrion. This is Pentatricopeptide repeat-containing protein At5g14770, mitochondrial from Arabidopsis thaliana (Mouse-ear cress).